Reading from the N-terminus, the 216-residue chain is MLDLFADAEPWQEPLAAGAVILRRFAFNAAEQLIRDINDVASQSPFRQMVTPGGYTMSVAMTNCGHLGWTTHRQGYLYSPIDPQTNKPWPAMPQSFHNLCQRAATAAGYPDFQPDACLINRYAPGAKLSLHQDKDEPDLRAPIVSVSLGLPAIFQFGGLKRNDPLKRLLLEHGDVVVWGGESRLFYHGIQPLKAGFHPLTIDCRYNLTFRQAGKKE.

Residues tryptophan 69 and 76 to 78 (YLY) each bind substrate. Residues 113-213 (QPDACLINRY…RYNLTFRQAG (101 aa)) enclose the Fe2OG dioxygenase domain. 120–122 (NRY) contributes to the 2-oxoglutarate binding site. 2 residues coordinate Fe cation: histidine 131 and aspartate 133. 2 residues coordinate substrate: aspartate 135 and arginine 161. Position 187 (histidine 187) interacts with Fe cation. 204 to 210 (RYNLTFR) lines the 2-oxoglutarate pocket.

This sequence belongs to the alkB family. The cofactor is Fe(2+).

It catalyses the reaction a methylated nucleobase within DNA + 2-oxoglutarate + O2 = a nucleobase within DNA + formaldehyde + succinate + CO2. Functionally, dioxygenase that repairs alkylated DNA and RNA containing 3-methylcytosine or 1-methyladenine by oxidative demethylation. Has highest activity towards 3-methylcytosine. Has lower activity towards alkylated DNA containing ethenoadenine, and no detectable activity towards 1-methylguanine or 3-methylthymine. Accepts double-stranded and single-stranded substrates. Requires molecular oxygen, alpha-ketoglutarate and iron. Provides extensive resistance to alkylating agents such as MMS and DMS (SN2 agents), but not to MMNG and MNU (SN1 agents). The sequence is that of Alpha-ketoglutarate-dependent dioxygenase AlkB (alkB) from Escherichia coli (strain K12).